A 145-amino-acid chain; its full sequence is Transmembrane protein 216 (145 aa).

The next 4 membrane-spanning stretches (helical) occupy residues 22-42 (ILFFLNGWYNATYFLLELFIF), 56-76 (LVLDVVMLLLYLGIEVIRLFF), 89-109 (LSISVALTFPSAMMASYYLLL), and 122-142 (GILLFFCGSELLLEVLTLAAF).

Part of the tectonic-like complex (also named B9 complex). Interacts with TMEM107.

Its subcellular location is the membrane. The protein resides in the cytoplasm. It localises to the cytoskeleton. The protein localises to the cilium basal body. Functionally, part of the tectonic-like complex which is required for tissue-specific ciliogenesis and may regulate ciliary membrane composition. The sequence is that of Transmembrane protein 216 (TMEM216) from Homo sapiens (Human).